The chain runs to 40 residues: Cell division inhibitor MciZ (40 aa).

In terms of assembly, interacts with FtsZ. Binds to the C-terminal polymerization interface of FtsZ. Binds to FtsZ filaments.

With respect to regulation, highly effective in inhibiting polymerization at low and intermediate concentrations of GTP and only partially effective at high GTP concentrations. Blocks Z-ring formation in the mother cell during sporulation by inhibiting the polymerization of FtsZ. Binds to the minus end of FtsZ and functions as a filament-capping protein. At high concentrations, is capable of both capping and sequestration of FtsZ. Decreases the GTPase activity of FtsZ. This chain is Cell division inhibitor MciZ, found in Bacillus subtilis (strain 168).